A 369-amino-acid polypeptide reads, in one-letter code: Methionine import ATP-binding protein MetN 2 (369 aa).

The region spanning 33–270 (VRFIGLGKTY…PRHEVTRTLL (238 aa)) is the ABC transporter domain. ATP is bound at residue 67 to 74 (GRSGAGKS).

The protein belongs to the ABC transporter superfamily. Methionine importer (TC 3.A.1.24) family. In terms of assembly, the complex is composed of two ATP-binding proteins (MetN), two transmembrane proteins (MetI) and a solute-binding protein (MetQ).

It localises to the cell inner membrane. The enzyme catalyses L-methionine(out) + ATP + H2O = L-methionine(in) + ADP + phosphate + H(+). It carries out the reaction D-methionine(out) + ATP + H2O = D-methionine(in) + ADP + phosphate + H(+). Its function is as follows. Part of the ABC transporter complex MetNIQ involved in methionine import. Responsible for energy coupling to the transport system. In Pseudomonas putida (strain ATCC 47054 / DSM 6125 / CFBP 8728 / NCIMB 11950 / KT2440), this protein is Methionine import ATP-binding protein MetN 2.